Reading from the N-terminus, the 364-residue chain is tRNA 2-selenouridine synthase (364 aa).

The Rhodanese domain maps to 14-137; the sequence is LIADTPIIDV…LRQTAIQATI (124 aa). C97 acts as the S-selanylcysteine intermediate in catalysis.

It belongs to the SelU family. In terms of assembly, monomer.

The catalysed reaction is 5-methylaminomethyl-2-thiouridine(34) in tRNA + selenophosphate + (2E)-geranyl diphosphate + H2O + H(+) = 5-methylaminomethyl-2-selenouridine(34) in tRNA + (2E)-thiogeraniol + phosphate + diphosphate. It catalyses the reaction 5-methylaminomethyl-2-thiouridine(34) in tRNA + (2E)-geranyl diphosphate = 5-methylaminomethyl-S-(2E)-geranyl-thiouridine(34) in tRNA + diphosphate. It carries out the reaction 5-methylaminomethyl-S-(2E)-geranyl-thiouridine(34) in tRNA + selenophosphate + H(+) = 5-methylaminomethyl-2-(Se-phospho)selenouridine(34) in tRNA + (2E)-thiogeraniol. The enzyme catalyses 5-methylaminomethyl-2-(Se-phospho)selenouridine(34) in tRNA + H2O = 5-methylaminomethyl-2-selenouridine(34) in tRNA + phosphate. Involved in the post-transcriptional modification of the uridine at the wobble position (U34) of tRNA(Lys), tRNA(Glu) and tRNA(Gln). Catalyzes the conversion of 2-thiouridine (S2U-RNA) to 2-selenouridine (Se2U-RNA). Acts in a two-step process involving geranylation of 2-thiouridine (S2U) to S-geranyl-2-thiouridine (geS2U) and subsequent selenation of the latter derivative to 2-selenouridine (Se2U) in the tRNA chain. The sequence is that of tRNA 2-selenouridine synthase from Escherichia coli O157:H7.